Here is a 981-residue protein sequence, read N- to C-terminus: NAD(+) hydrolase tir-1 (981 aa).

Disordered stretches follow at residues 1 to 31 (MLPN…RSLK), 74 to 128 (QNEQ…PTQP), and 173 to 225 (LSTP…PVDQ). 2 stretches are compositionally biased toward polar residues: residues 12–23 (PSFQSLNNNNQR) and 74–85 (QNEQDGETTSTD). Positions 87–97 (AFFELDDDDDL) are enriched in acidic residues. Residues 98–114 (SSPSVPGSPVDPPSISV) show a composition bias toward low complexity. Pro residues predominate over residues 115–128 (PLPPKSAPPCPTQP). Residues 182–200 (EEMHNGQVRKESEYRRFKS) show a composition bias toward basic and acidic residues. SAM domains follow at residues 614-678 (WTCA…LKVA) and 684-750 (VDES…AKHP). Residues 760 to 857 (KQIDVFISYR…EHQKNIIPIF (98 aa)) form the TIR domain. 769–770 (RR) provides a ligand contact to NAD(+). The active site involves E842. Composition is skewed to polar residues over residues 908–939 (TTPT…TGPS), 954–963 (FTPTGSQERA), and 972–981 (PSASTTSDRN). Residues 908-981 (TTPTTKEMPS…PSASTTSDRN (74 aa)) form a disordered region.

The protein belongs to the SARM1 family. In terms of assembly, homodimer. Interacts with rab-1, pal-1 and unc-43. In terms of tissue distribution, highly expressed in hypodermis. Localizes to postsynaptic regions of axons.

Its subcellular location is the cytoplasm. The catalysed reaction is NAD(+) + H2O = ADP-D-ribose + nicotinamide + H(+). Its function is as follows. NAD(+) hydrolase, which plays a key role in non-apoptotic cell death by regulating NAD(+) metabolism. In response to stress, homooligomerizes and catalyzes cleavage of NAD(+) into ADP-D-ribose (ADPR) and nicotinamide; NAD(+) cleavage promoting non-apoptotic neuronal cell death. In males, involved in non-apoptotic death of the linker cell which guides gonad elongation during larval development. Required for both innate immune response and specification of AWC(OFF) neuron. During late embryogenesis, it acts downstream of CAMKII (unc-43) to regulate specification of asymmetric odorant receptors in AWC(OFF) neuron via the nsy-1/ASK1 pmk-1/p38 MAP kinase signaling cascade. Required to localize nsy-1 to postsynaptic regions of AWC neuron, suggesting that it may act by assembling a signaling complex that regulate odorant receptor expression. Also plays a central role in resistance to infection to a broad range of bacterial and fungi pathogens, possibly by activating pmk-1, independently of the NF-kappa-B pathway. Required for expression of antimicrobial peptides nlp-29 and nlp-31. Its role in immune response and neuron specification may be mediated by the same nsy-1/ASK1 pmk-1/p38 MAP kinase cascade signaling pathway. Involved in the response to anoxic conditions probably by activating the p38 pathway composed of nsy-1/sek-1/pmk-1. Involved in regulation of the serotonergic response of ADF neurons to pathogenic food. In addition, plays a role in the up-regulation of gcs-1 upon arsenite treatment, most likely through activation of pmk-1, to confer protection against toxicity induced by heavy metals. Regulates expression of antimicrobial peptide nlp-29 in response to fungal infection or physical injury. The chain is NAD(+) hydrolase tir-1 from Caenorhabditis elegans.